Here is a 684-residue protein sequence, read N- to C-terminus: DNA-directed RNA polymerase subunit beta' (684 aa).

Positions 69, 71, 87, and 90 each coordinate Zn(2+). Aspartate 489, aspartate 491, and aspartate 493 together coordinate Mg(2+).

Belongs to the RNA polymerase beta' chain family. RpoC1 subfamily. In plastids the minimal PEP RNA polymerase catalytic core is composed of four subunits: alpha, beta, beta', and beta''. When a (nuclear-encoded) sigma factor is associated with the core the holoenzyme is formed, which can initiate transcription. It depends on Mg(2+) as a cofactor. Zn(2+) serves as cofactor.

It localises to the plastid. Its subcellular location is the chloroplast. It catalyses the reaction RNA(n) + a ribonucleoside 5'-triphosphate = RNA(n+1) + diphosphate. Its function is as follows. DNA-dependent RNA polymerase catalyzes the transcription of DNA into RNA using the four ribonucleoside triphosphates as substrates. This Morus indica (Mulberry) protein is DNA-directed RNA polymerase subunit beta'.